The following is a 529-amino-acid chain: Cytochrome P450 monooxygenase patI (529 aa).

Topologically, residues 1-8 are cytoplasmic; the sequence is MDFTQVPP. A helical transmembrane segment spans residues 9-25; it reads SYILGVLLSSTSILFCL. Residues 26 to 529 lie on the Lumenal side of the membrane; the sequence is KYLLRSGYRP…EAQGVFSRFD (504 aa). N81 and N383 each carry an N-linked (GlcNAc...) asparagine glycan. C449 provides a ligand contact to heme.

It belongs to the cytochrome P450 family. It depends on heme as a cofactor.

It is found in the endoplasmic reticulum membrane. It carries out the reaction 3-hydroxybenzyl alcohol + reduced [NADPH--hemoprotein reductase] + O2 = gentisyl alcohol + oxidized [NADPH--hemoprotein reductase] + H2O + H(+). It functions in the pathway mycotoxin biosynthesis; patulin biosynthesis. In terms of biological role, cytochrome P450 monooxygenase; part of the gene cluster that mediates the biosynthesis of patulin, an acetate-derived tetraketide mycotoxin produced by several fungal species that shows antimicrobial properties against several bacteria. PatI catalyzes the conversion of m-hydroxybenzyl alcohol into gentisyl alcohol. The pathway begins with the synthesis of 6-methylsalicylic acid by the polyketide synthase (PKS) patK via condensation of acetate and malonate units. The 6-methylsalicylic acid decarboxylase patG then catalyzes the decarboxylation of 6-methylsalicylic acid to yield m-cresol (also known as 3-methylphenol). These first reactions occur in the cytosol. The intermediate m-cresol is then transported into the endoplasmic reticulum where the cytochrome P450 monooxygenase patH converts it to m-hydroxybenzyl alcohol, which is further converted to gentisyl alcohol by the cytochrome P450 monooxygenase patI. The oxidoreductases patJ and patO further convert gentisyl alcohol to isoepoxydon in the vacuole. PatN catalyzes then the transformation of isoepoxydon into phyllostine. The cluster protein patF is responsible for the conversion from phyllostine to neopatulin whereas the alcohol dehydrogenase patD converts neopatulin to E-ascladiol. The steps between isoepoxydon and E-ascladiol occur in the cytosol, and E-ascladiol is probably secreted to the extracellular space by one of the cluster-specific transporters patC or patM. Finally, the secreted patulin synthase patE catalyzes the conversion of E-ascladiol to patulin. The polypeptide is Cytochrome P450 monooxygenase patI (Aspergillus clavatus (strain ATCC 1007 / CBS 513.65 / DSM 816 / NCTC 3887 / NRRL 1 / QM 1276 / 107)).